Reading from the N-terminus, the 50-residue chain is Protein HokA (50 aa).

A helical membrane pass occupies residues 7 to 24 (LLSLIVICFTLLFFTWMI).

The protein belongs to the Hok/Gef family.

Its subcellular location is the cell inner membrane. Toxic component of a type I toxin-antitoxin (TA) system. When overexpressed kills cells within minutes; causes collapse of the transmembrane potential and arrest of respiration. Its toxic effect is probably neutralized by antisense antitoxin RNA SokA. The sequence is that of Protein HokA from Escherichia coli (strain K12).